We begin with the raw amino-acid sequence, 462 residues long: Notoamide biosynthesis cluster protein O' (462 aa).

The next 3 helical transmembrane spans lie at 16–36 (IFNV…WAAM), 55–75 (AVIF…IAKI), and 79–99 (WAFA…YCNV). An N-linked (GlcNAc...) asparagine glycan is attached at Asn-102. 4 consecutive transmembrane segments (helical) span residues 104–124 (SWYI…FWLT), 143–163 (AYWL…TLGV), 173–193 (ISVQ…FVAA), and 233–253 (ILLL…FSTY). N-linked (GlcNAc...) asparagine glycosylation occurs at Asn-254. 4 helical membrane-spanning segments follow: residues 265–285 (LSSL…GFFL), 297–317 (MAAF…AMVV), 343–363 (VYIL…WLIG), and 404–424 (AVAV…FVIY). A disordered region spans residues 443–462 (LQTSGEGSHDIMDANGKSDD). Residues 449-462 (GSHDIMDANGKSDD) show a composition bias toward basic and acidic residues.

This sequence belongs to the unc-93 family.

It is found in the membrane. Its function is as follows. Part of the gene cluster that mediates the biosynthesis of notoamide, a fungal indole alkaloid that belongs to a family of natural products containing a characteristic bicyclo[2.2.2]diazaoctane core. The first step of notoamide biosynthesis involves coupling of L-proline and L-tryptophan by the bimodular NRPS notE', to produce cyclo-L-tryptophan-L-proline called brevianamide F. The reverse prenyltransferase notF' then acts as a deoxybrevianamide E synthase and converts brevianamide F to deoxybrevianamide E via reverse prenylation at C-2 of the indole ring leading to the bicyclo[2.2.2]diazaoctane core. Deoxybrevianamide E is further hydroxylated at C-6 of the indole ring, likely catalyzed by the cytochrome P450 monooxygenase notG', to yield 6-hydroxy-deoxybrevianamide E. 6-hydroxy-deoxybrevianamide E is a specific substrate of the prenyltransferase notC' for normal prenylation at C-7 to produce 6-hydroxy-7-prenyl-deoxybrevianamide, also called notoamide S. As the proposed pivotal branching point in notoamide biosynthesis, notoamide S can be diverted to notoamide E through an oxidative pyran ring closure putatively catalyzed by either notH' cytochrome P450 monooxygenase or the notD' FAD-linked oxidoreductase. This step would be followed by an indole 2,3-epoxidation-initiated pinacol-like rearrangement catalyzed by the notB' FAD-dependent monooxygenase leading to the formation of notoamide C and notoamide D. On the other hand notoamide S is converted to notoamide T by notH' (or notD'), a bifunctional oxidase that also functions as the intramolecular Diels-Alderase responsible for generation of (-)-notoamide T. To generate antipodal (+)-notoaminide T, notH (or notD) in Aspergillus strain MF297-2 is expected to catalyze a Diels-Alder reaction leading to the opposite stereochemistry. The remaining oxidoreductase notD' (or notH') likely catalyzes the oxidative pyran ring formation to yield (-)-stephacidin A. The FAD-dependent monooxygenase notI' is highly similar to notB' and is predicted to catalyze a similar conversion from (-)-stephacidin A to (+)-notoamide B via the 2,3-epoxidation of (-)-stephacidin A followed by a pinacol-type rearrangement. Finally, it remains unclear which enzyme could be responsible for the final hydroxylation steps leading to notoamide A and sclerotiamide. The function of notO' in the notoamide biosynthesis has not been determined yet. The polypeptide is Notoamide biosynthesis cluster protein O' (Aspergillus versicolor).